The chain runs to 273 residues: MSTIRPVFYVSDGTGITAETIGHSLLTQFSGFSFITDRMSFVDDPEKAREACARIQAAGERYQVRPIVVNSCVDQSLSLILADSGALMLDVFAPFIEPLERELASPRLARVGQAHGMVDFDTYHRRINAMNFALTHDDGIAVNYDDADVILVAVSRAGKTPTCIYLALHYGVRAANYPLTDEDLESDRLPPRLRNYRRKLFGLTIDPDRLQQIRQERRPNSRYANLETCKREVAAAEVMFQMERIPTLSTTHTSIEEISSKVLATLGLQRELY.

153-160 (AVSRAGKT) provides a ligand contact to ADP.

The protein belongs to the pyruvate, phosphate/water dikinase regulatory protein family. PSRP subfamily.

The catalysed reaction is [pyruvate, water dikinase] + ADP = [pyruvate, water dikinase]-phosphate + AMP + H(+). It carries out the reaction [pyruvate, water dikinase]-phosphate + phosphate + H(+) = [pyruvate, water dikinase] + diphosphate. Functionally, bifunctional serine/threonine kinase and phosphorylase involved in the regulation of the phosphoenolpyruvate synthase (PEPS) by catalyzing its phosphorylation/dephosphorylation. In Stenotrophomonas maltophilia (strain K279a), this protein is Putative phosphoenolpyruvate synthase regulatory protein.